The primary structure comprises 191 residues: Large ribosomal subunit protein bL9 (191 aa).

The interval Ala151–Glu191 is disordered.

This sequence belongs to the bacterial ribosomal protein bL9 family.

Functionally, binds to the 23S rRNA. In Sinorhizobium medicae (strain WSM419) (Ensifer medicae), this protein is Large ribosomal subunit protein bL9.